The sequence spans 375 residues: Succinyl-diaminopimelate desuccinylase (375 aa).

Histidine 75 serves as a coordination point for Zn(2+). Aspartate 77 is an active-site residue. Position 106 (aspartate 106) interacts with Zn(2+). The active-site Proton acceptor is the glutamate 136. Residues glutamate 137, glutamate 165, and histidine 348 each coordinate Zn(2+).

It belongs to the peptidase M20A family. DapE subfamily. Homodimer. Zn(2+) is required as a cofactor. Co(2+) serves as cofactor.

It catalyses the reaction N-succinyl-(2S,6S)-2,6-diaminopimelate + H2O = (2S,6S)-2,6-diaminopimelate + succinate. The protein operates within amino-acid biosynthesis; L-lysine biosynthesis via DAP pathway; LL-2,6-diaminopimelate from (S)-tetrahydrodipicolinate (succinylase route): step 3/3. Its function is as follows. Catalyzes the hydrolysis of N-succinyl-L,L-diaminopimelic acid (SDAP), forming succinate and LL-2,6-diaminopimelate (DAP), an intermediate involved in the bacterial biosynthesis of lysine and meso-diaminopimelic acid, an essential component of bacterial cell walls. This Novosphingobium aromaticivorans (strain ATCC 700278 / DSM 12444 / CCUG 56034 / CIP 105152 / NBRC 16084 / F199) protein is Succinyl-diaminopimelate desuccinylase.